The following is a 520-amino-acid chain: MPGSLPLNAEACWPKDVGIVALEIYFPSQYVDQAELEKYDGVDAGKYTIGLGQARMGFCTDREDINSLCLTVVQKLMERHSLSYDCIGRLEVGTETIIDKSKSVKSNLMQLFEESGNTDIEGIDTTNACYGGTAAVFNAVNWVESSSWDGRYALVVAGDIAIYATGNARPTGGVGAVALLIGPNAPLIFDRGLRGTHMQHAYDFYKPDMLSEYPVVDGKLSIQCYLSALDRCYSVYRKKIRAQWQKEGKDKDFTLNDFGFMIFHSPYCKLVQKSLARMFLNDFLNDQNRDKNSIYSGLEAFGDVKLEDTYFDRDVEKAFMKASSELFNQKTKASLLVSNQNGNMYTSSVYGSLASVLAQYSPQQLAGKRVGVFSYGSGLAATLYSLKVTQDATPGSALDKITASLCDLKSRLDSRTCVAPDVFAENMKLREDTHHLANYIPQCSIDSLFEGTWYLVRVDEKHRRTYARRPFTNDHSLDEGMGLVHSNTATEHIPSPAKKVPRLPATSAESESAVISNGEH.

Serine 4 is modified (phosphoserine). Aspartate 43 and alanine 44 together coordinate (3S)-3-hydroxy-3-methylglutaryl-CoA. A CoA-binding site is contributed by 44 to 46; it reads AGK. Lysine 46 is modified (N6-acetyllysine). The active-site Proton donor/acceptor is glutamate 95. (3S)-3-hydroxy-3-methylglutaryl-CoA-binding residues include cysteine 129, asparagine 167, threonine 171, serine 221, and histidine 264. Cysteine 129 functions as the Acyl-thioester intermediate in the catalytic mechanism. Residue asparagine 167 coordinates CoA. CoA is bound at residue serine 221. The active-site Proton donor/acceptor is the histidine 264. CoA-binding residues include lysine 269 and lysine 273. The (3S)-3-hydroxy-3-methylglutaryl-CoA site is built by lysine 273, asparagine 343, and serine 377. Lysine 273 carries the post-translational modification N6-acetyllysine. Positions 488–520 are disordered; that stretch reads TATEHIPSPAKKVPRLPATSAESESAVISNGEH. Phosphoserine occurs at positions 495 and 516. The segment covering 507–520 has biased composition (polar residues); sequence SAESESAVISNGEH.

The protein belongs to the thiolase-like superfamily. HMG-CoA synthase family. Homodimer.

The protein localises to the cytoplasm. It carries out the reaction acetoacetyl-CoA + acetyl-CoA + H2O = (3S)-3-hydroxy-3-methylglutaryl-CoA + CoA + H(+). It functions in the pathway metabolic intermediate biosynthesis; (R)-mevalonate biosynthesis; (R)-mevalonate from acetyl-CoA: step 2/3. Functionally, catalyzes the condensation of acetyl-CoA with acetoacetyl-CoA to form HMG-CoA, which is converted by HMG-CoA reductase (HMGCR) into mevalonate, a precursor for cholesterol synthesis. The polypeptide is Hydroxymethylglutaryl-CoA synthase, cytoplasmic (Mus musculus (Mouse)).